A 380-amino-acid polypeptide reads, in one-letter code: Cytochrome b (380 aa).

Helical transmembrane passes span phenylalanine 33–methionine 53, tryptophan 77–valine 98, tryptophan 113–leucine 133, and phenylalanine 178–leucine 198. Heme b contacts are provided by histidine 83 and histidine 97. Residues histidine 182 and histidine 196 each contribute to the heme b site. Histidine 201 serves as a coordination point for a ubiquinone. The next 4 helical transmembrane spans lie at tyrosine 226–serine 246, leucine 288–histidine 308, proline 320–glycine 340, and phenylalanine 347–proline 367.

This sequence belongs to the cytochrome b family. The cytochrome bc1 complex contains 3 respiratory subunits (MT-CYB, CYC1 and UQCRFS1), 2 core proteins (UQCRC1 and UQCRC2) and probably 6 low-molecular weight proteins. Requires heme b as cofactor.

Its subcellular location is the mitochondrion inner membrane. Its function is as follows. Component of the ubiquinol-cytochrome c reductase complex (complex III or cytochrome b-c1 complex) that is part of the mitochondrial respiratory chain. The b-c1 complex mediates electron transfer from ubiquinol to cytochrome c. Contributes to the generation of a proton gradient across the mitochondrial membrane that is then used for ATP synthesis. This Acipenser sinensis (Chinese sturgeon) protein is Cytochrome b (mt-cyb).